A 736-amino-acid polypeptide reads, in one-letter code: MVVFNGLLKIKICEAVSLKPTAWSLRHAVGPRPQTFLLDPYIALNVDDSRIGQTATKQKTNSPAWHDEFVTDVCNGRKIELAVFHDAPIGYDDFVANCTIQFEELLQNGSRHFEDWIDLEPEGKVYVIIDLSGSSGEAPKDNEERVFRERMRPRKRQGAVRRRVHQVNGHKFMATYLRQPTYCSHCRDFIWGVIGKQGYQCQVCTCVVHKRCHELIITKVAGLKKQETPDEVGSQRFSVNMPHKFGIHNYKVPTFCDHCGSLLWGLLRQGLQCKVCKMNVHRRCETNVAPNCGVDARGIAKVLADLGVTPDKITNSGQRRKKLIGGAESPQPTSGSSPSEEDRSKSAPTSPCDQELKELENNIRKALSFDNRGEEHRAASSTDGQLGSPENGEVRQGQAKRLGLDEFNFIKVLGKGSFGKVMLAELKGKDEVYAVKVLKKDVILQDDDVDCTMTEKRILALARKHPYLTQLYCCFQTKDRLFFVMEYVNGGDLMFQIQRSRKFDEPRSRFYAAEVTSALMFLHQHGVIYRDLKLDNILLDAEGHCKLADFGMCKEGILNGVTTTTFCGTPDYIAPEILQELEYGPSVDWWALGVLMYEMMAGQPPFEADNEDDLFESILHDDVLYPVWLSKEAVSILKAFMTKNPHKRLGCVAAQNGEDAIKQHPFFKEIDWVLLEQKKIKPPFKPRIKTKRDVNNFDQDFTREEPVLTLVDEAIVKQINQEEFKGFSYFGEDLMP.

The 117-residue stretch at 1–117 folds into the C2 domain; that stretch reads MVVFNGLLKI…NGSRHFEDWI (117 aa). Residue serine 62 is modified to Phosphoserine. The Phorbol-ester/DAG-type 1 zinc finger occupies 169–220; the sequence is GHKFMATYLRQPTYCSHCRDFIWGVIGKQGYQCQVCTCVVHKRCHELIITKV. Threonine 228 carries the post-translational modification Phosphothreonine. At serine 234 the chain carries Phosphoserine. The Phorbol-ester/DAG-type 2 zinc-finger motif lies at 242-292; it reads PHKFGIHNYKVPTFCDHCGSLLWGLLRQGLQCKVCKMNVHRRCETNVAPNC. Threonine 309 is subject to Phosphothreonine. The disordered stretch occupies residues 310–356; it reads PDKITNSGQRRKKLIGGAESPQPTSGSSPSEEDRSKSAPTSPCDQEL. A phosphoserine mark is found at serine 316, serine 329, and serine 337. Position 346 is a phosphoserine; by GSK3-beta (serine 346). Threonine 349 carries the post-translational modification Phosphothreonine. Serine 350 is subject to Phosphoserine; by MAPK11 and MAPK14. Serine 368 carries the post-translational modification Phosphoserine; by autocatalysis. Residues 369–397 form a disordered region; the sequence is FDNRGEEHRAASSTDGQLGSPENGEVRQG. Serine 388 carries the phosphoserine modification. The 261-residue stretch at 407–667 folds into the Protein kinase domain; that stretch reads FNFIKVLGKG…EDAIKQHPFF (261 aa). Residues 413–421 and lysine 436 each bind ATP; that span reads LGKGSFGKV. The Proton acceptor role is filled by aspartate 531. A Phosphothreonine; by PDPK1 modification is found at threonine 565. The AGC-kinase C-terminal domain maps to 668–736; the sequence is KEIDWVLLEQ…FSYFGEDLMP (69 aa). Position 702 is a phosphothreonine (threonine 702). Threonine 709 carries the phosphothreonine; by autocatalysis modification. Serine 728 is subject to Phosphoserine; by autocatalysis.

This sequence belongs to the protein kinase superfamily. AGC Ser/Thr protein kinase family. PKC subfamily. As to quaternary structure, forms a ternary complex with TRIM63 and RACK1/GN2BL1. Can form a complex with PDLIM5 and N-type calcium channel. Interacts with COPB1. Interacts with DGKQ. Interacts with STAT3. Interacts with YWHAB. Interacts with HSP90AB1; promotes functional activation in a heat shock-dependent manner. Interacts (via phorbol-ester/DAG-type 2 domain) with PRPH and VIM. Interacts with NLRP5/MATER. Post-translationally, phosphorylation on Thr-565 by PDPK1 triggers autophosphorylation on Ser-728. Phosphorylation in the hinge domain at Ser-350 by MAPK11 or MAPK14, Ser-346 by GSK3B and Ser-368 by autophosphorylation is required for interaction with YWHAB. In response to growth factors, phosphorylated at Thr-702 and Ser-728 by the mTORC2 complex, promoting autophosphorylation and activation of PRKCE.

It is found in the cytoplasm. The protein resides in the cytoskeleton. The protein localises to the cell membrane. It localises to the perinuclear region. Its subcellular location is the nucleus. It catalyses the reaction L-seryl-[protein] + ATP = O-phospho-L-seryl-[protein] + ADP + H(+). The enzyme catalyses L-threonyl-[protein] + ATP = O-phospho-L-threonyl-[protein] + ADP + H(+). With respect to regulation, novel PKCs (PRKCD, PRKCE, PRKCH and PRKCQ) are calcium-insensitive, but activated by diacylglycerol (DAG) and phosphatidylserine. Three specific sites; Thr-565 (activation loop of the kinase domain), Thr-709 (turn motif) and Ser-728 (hydrophobic region), need to be phosphorylated for its full activation. Functionally, calcium-independent, phospholipid- and diacylglycerol (DAG)-dependent serine/threonine-protein kinase that plays essential roles in the regulation of multiple cellular processes linked to cytoskeletal proteins, such as cell adhesion, motility, migration and cell cycle, functions in neuron growth and ion channel regulation, and is involved in immune response, cancer cell invasion and regulation of apoptosis. Mediates cell adhesion to the extracellular matrix via integrin-dependent signaling, by mediating angiotensin-2-induced activation of integrin beta-1 (ITGB1) in cardiac fibroblasts. Phosphorylates MARCKS, which phosphorylates and activates PTK2/FAK, leading to the spread of cardiomyocytes. Involved in the control of the directional transport of ITGB1 in mesenchymal cells by phosphorylating vimentin (VIM), an intermediate filament (IF) protein. In epithelial cells, associates with and phosphorylates keratin-8 (KRT8), which induces targeting of desmoplakin at desmosomes and regulates cell-cell contact. Phosphorylates IQGAP1, which binds to CDC42, mediating epithelial cell-cell detachment prior to migration. During cytokinesis, forms a complex with YWHAB, which is crucial for daughter cell separation, and facilitates abscission by a mechanism which may implicate the regulation of RHOA. In cardiac myocytes, regulates myofilament function and excitation coupling at the Z-lines, where it is indirectly associated with F-actin via interaction with COPB1. During endothelin-induced cardiomyocyte hypertrophy, mediates activation of PTK2/FAK, which is critical for cardiomyocyte survival and regulation of sarcomere length. Plays a role in the pathogenesis of dilated cardiomyopathy via persistent phosphorylation of troponin I (TNNI3). Involved in nerve growth factor (NFG)-induced neurite outgrowth and neuron morphological change independently of its kinase activity, by inhibition of RHOA pathway, activation of CDC42 and cytoskeletal rearrangement. May be involved in presynaptic facilitation by mediating phorbol ester-induced synaptic potentiation. Phosphorylates gamma-aminobutyric acid receptor subunit gamma-2 (GABRG2), which reduces the response of GABA receptors to ethanol and benzodiazepines and may mediate acute tolerance to the intoxicating effects of ethanol. Upon PMA treatment, phosphorylates the capsaicin- and heat-activated cation channel TRPV1, which is required for bradykinin-induced sensitization of the heat response in nociceptive neurons. Is able to form a complex with PDLIM5 and N-type calcium channel, and may enhance channel activities and potentiates fast synaptic transmission by phosphorylating the pore-forming alpha subunit CACNA1B (CaV2.2). Downstream of TLR4, plays an important role in the lipopolysaccharide (LPS)-induced immune response by phosphorylating and activating TICAM2/TRAM, which in turn activates the transcription factor IRF3 and subsequent cytokines production. In differentiating erythroid progenitors, is regulated by EPO and controls the protection against the TNFSF10/TRAIL-mediated apoptosis, via BCL2. May be involved in the regulation of the insulin-induced phosphorylation and activation of AKT1. Phosphorylates NLRP5/MATER and may thereby modulate AKT pathway activation in cumulus cells. Phosphorylates and activates LRRK1, which phosphorylates RAB proteins involved in intracellular trafficking. This Oryctolagus cuniculus (Rabbit) protein is Protein kinase C epsilon type (PRKCE).